Here is a 365-residue protein sequence, read N- to C-terminus: Carbamoyl phosphate synthase small chain (365 aa).

CPSase stretches follow at residues 1–166 (MKRQ…PSPG) and 1–169 (MKRQ…GRGH). Residues S45, G218, and G220 each contribute to the L-glutamine site. Residues 170-357 (RVVLVDFGMK…LTMIENFKKE (188 aa)) enclose the Glutamine amidotransferase type-1 domain. C245 (nucleophile) is an active-site residue. Residues L246, Q249, N287, G289, and Y290 each contribute to the L-glutamine site. Residues H330 and E332 contribute to the active site.

The protein belongs to the CarA family. In terms of assembly, composed of two chains; the small (or glutamine) chain promotes the hydrolysis of glutamine to ammonia, which is used by the large (or ammonia) chain to synthesize carbamoyl phosphate. Tetramer of heterodimers (alpha,beta)4.

The catalysed reaction is hydrogencarbonate + L-glutamine + 2 ATP + H2O = carbamoyl phosphate + L-glutamate + 2 ADP + phosphate + 2 H(+). It carries out the reaction L-glutamine + H2O = L-glutamate + NH4(+). Its pathway is amino-acid biosynthesis; L-arginine biosynthesis; carbamoyl phosphate from bicarbonate: step 1/1. It participates in pyrimidine metabolism; UMP biosynthesis via de novo pathway; (S)-dihydroorotate from bicarbonate: step 1/3. Functionally, small subunit of the glutamine-dependent carbamoyl phosphate synthetase (CPSase). CPSase catalyzes the formation of carbamoyl phosphate from the ammonia moiety of glutamine, carbonate, and phosphate donated by ATP, constituting the first step of 2 biosynthetic pathways, one leading to arginine and/or urea and the other to pyrimidine nucleotides. The small subunit (glutamine amidotransferase) binds and cleaves glutamine to supply the large subunit with the substrate ammonia. In Bacillus cereus (strain ATCC 14579 / DSM 31 / CCUG 7414 / JCM 2152 / NBRC 15305 / NCIMB 9373 / NCTC 2599 / NRRL B-3711), this protein is Carbamoyl phosphate synthase small chain.